The sequence spans 1121 residues: uncharacterized protein (1121 aa).

The segment at 179-198 (GPGECQSVHNQSSGSGSNSY) is disordered. N-linked (GlcNAc...) asparagine; by host glycans are attached at residues Asn-188, Asn-325, Asn-351, Asn-449, Asn-561, and Asn-615. Disordered stretches follow at residues 649-684 (KRIH…RIHN) and 701-734 (STRQ…TDSD). Residues 701 to 715 (STRQDASGGSSSGTK) show a composition bias toward polar residues. Asn-838, Asn-911, Asn-914, and Asn-980 each carry an N-linked (GlcNAc...) asparagine; by host glycan.

It belongs to the herpesviridae US22 family.

This is an uncharacterized protein from Homo sapiens (Human).